Here is a 422-residue protein sequence, read N- to C-terminus: Histidine--tRNA ligase (422 aa).

This sequence belongs to the class-II aminoacyl-tRNA synthetase family. As to quaternary structure, homodimer.

It is found in the cytoplasm. It catalyses the reaction tRNA(His) + L-histidine + ATP = L-histidyl-tRNA(His) + AMP + diphosphate + H(+). The sequence is that of Histidine--tRNA ligase from Lysinibacillus sphaericus (strain C3-41).